The following is a 165-amino-acid chain: MNYKGKAHKVGEHIDTDAIIPARFLVTTDAQKLGENCMSGLEPSWASRVAPGDIMVAGRNFGCGSSREHAPIAILGAGMPVVIGHSFARIFYRNAFNMGLLLMEVGDEVDKISDGDALEIDASTGAIRNLTTGAEITCPPLPASMAAILAKGGLVGYVKERLAQV.

Belongs to the LeuD family. LeuD type 2 subfamily. In terms of assembly, heterodimer of LeuC and LeuD.

The enzyme catalyses (2R,3S)-3-isopropylmalate = (2S)-2-isopropylmalate. Its pathway is amino-acid biosynthesis; L-leucine biosynthesis; L-leucine from 3-methyl-2-oxobutanoate: step 2/4. Its function is as follows. Catalyzes the isomerization between 2-isopropylmalate and 3-isopropylmalate, via the formation of 2-isopropylmaleate. In Desulfovibrio desulfuricans (strain ATCC 27774 / DSM 6949 / MB), this protein is 3-isopropylmalate dehydratase small subunit.